A 252-amino-acid polypeptide reads, in one-letter code: Deoxyuridine 5'-triphosphate nucleotidohydrolase, mitochondrial (252 aa).

Residues 1–69 (MTPLCPRPAL…AGRLSQGCRG (69 aa)) constitute a mitochondrion transit peptide. C11, S88, and S99 each carry phosphoserine. The segment at 78–104 (WKGELPKAGGSPAPGPETPAISPSKRA) is disordered. DUTP is bound by residues 173 to 175 (RSG), 187 to 193 (GVIDEDY), G198, R241, and 246 to 247 (FG).

The protein belongs to the dUTPase family. As to quaternary structure, homotrimer. Mg(2+) serves as cofactor. In terms of processing, nuclear isoform 2 is phosphorylated in vivo on Ser-11, a reaction that can be catalyzed in vitro by CDC2. Phosphorylation in mature T-cells occurs in a cell cycle-dependent manner. Isoform 3 is not phosphorylated. As to expression, found in a variety of tissues. Isoform 3 expression is constitutive, while isoform 2 expression correlates with the onset of DNA replication (at protein level). Isoform 2 degradation coincides with the cessation of nuclear DNA replication (at protein level).

It localises to the nucleus. The protein resides in the mitochondrion. It catalyses the reaction dUTP + H2O = dUMP + diphosphate + H(+). The protein operates within pyrimidine metabolism; dUMP biosynthesis; dUMP from dCTP (dUTP route): step 2/2. Phosphorylation is necessary for activity. Functionally, catalyzes the cleavage of 2'-deoxyuridine 5'-triphosphate (dUTP) into 2'-deoxyuridine 5'-monophosphate (dUMP) and inorganic pyrophosphate and through its action efficiently prevents uracil misincorporation into DNA and at the same time provides dUMP, the substrate for de novo thymidylate biosynthesis. Inhibits peroxisome proliferator-activated receptor (PPAR) activity by binding of its N-terminal to PPAR, preventing the latter's dimerization with retinoid X receptor. Essential for embryonic development. This chain is Deoxyuridine 5'-triphosphate nucleotidohydrolase, mitochondrial (DUT), found in Homo sapiens (Human).